The following is a 240-amino-acid chain: MKIDILTLFPEMFAPLEHSIVGKAREKGLLEINYHNFRENAEKSRHVDDEPYGGGQGMLLRAQPIFDAYDDIEKKQPRVILLDPAGRTFDQAYAEELAKEEELIFICGHYEGYDERIKTLVTDEISLGDYILTGGELAAMTMIDATVRLIPEVIGKEASHTDDSFSSGLLEYPQYTRPYDYRGMVVPEVLMSGHHENIRKWRLYESLKKTYLRRPDLLKHYEMTVEEEAMLEEIRHAHSD.

Residues G108 and 127–132 (LGDYIL) each bind S-adenosyl-L-methionine.

This sequence belongs to the RNA methyltransferase TrmD family. As to quaternary structure, homodimer.

The protein localises to the cytoplasm. The catalysed reaction is guanosine(37) in tRNA + S-adenosyl-L-methionine = N(1)-methylguanosine(37) in tRNA + S-adenosyl-L-homocysteine + H(+). Specifically methylates guanosine-37 in various tRNAs. The sequence is that of tRNA (guanine-N(1)-)-methyltransferase from Streptococcus sanguinis (strain SK36).